The chain runs to 155 residues: Large ribosomal subunit protein eL24A (155 aa).

Ser-7 carries the phosphoserine modification. Residues Glu-66–Arg-155 are disordered. Residues Leu-89 to Lys-129 show a composition bias toward basic and acidic residues. Polar residues predominate over residues Ala-131–Gln-142.

Belongs to the eukaryotic ribosomal protein eL24 family. Component of the large ribosomal subunit (LSU). Mature yeast ribosomes consist of a small (40S) and a large (60S) subunit. The 40S small subunit contains 1 molecule of ribosomal RNA (18S rRNA) and 33 different proteins (encoded by 57 genes). The large 60S subunit contains 3 rRNA molecules (25S, 5.8S and 5S rRNA) and 46 different proteins (encoded by 81 genes).

The protein resides in the cytoplasm. Functionally, component of the ribosome, a large ribonucleoprotein complex responsible for the synthesis of proteins in the cell. The small ribosomal subunit (SSU) binds messenger RNAs (mRNAs) and translates the encoded message by selecting cognate aminoacyl-transfer RNA (tRNA) molecules. The large subunit (LSU) contains the ribosomal catalytic site termed the peptidyl transferase center (PTC), which catalyzes the formation of peptide bonds, thereby polymerizing the amino acids delivered by tRNAs into a polypeptide chain. The nascent polypeptides leave the ribosome through a tunnel in the LSU and interact with protein factors that function in enzymatic processing, targeting, and the membrane insertion of nascent chains at the exit of the ribosomal tunnel. This is Large ribosomal subunit protein eL24A from Saccharomyces cerevisiae (strain ATCC 204508 / S288c) (Baker's yeast).